The primary structure comprises 24 residues: Xenoposin precursor fragment B2 (24 aa).

In terms of tissue distribution, expressed by the skin glands.

It localises to the secreted. In terms of biological role, has antimicrobial activity against Gram-negative bacterium E.coli ATCC 25922 (MIC=100 uM), Gram-positive bacterium S.auerus ATCC 25923 (MIC=25 uM). This Xenopus borealis (Kenyan clawed frog) protein is Xenoposin precursor fragment B2.